We begin with the raw amino-acid sequence, 277 residues long: Shikimate dehydrogenase (NADP(+)) (277 aa).

Shikimate is bound by residues 15-17 and Thr-62; that span reads SLS. Lys-66 serves as the catalytic Proton acceptor. The shikimate site is built by Asn-87 and Asp-102. Residues 127–131, 151–156, and Ile-219 each bind NADP(+); these read GAGGA and NRTVDK. Tyr-221 contributes to the shikimate binding site. Gly-242 lines the NADP(+) pocket.

The protein belongs to the shikimate dehydrogenase family. In terms of assembly, homodimer.

The enzyme catalyses shikimate + NADP(+) = 3-dehydroshikimate + NADPH + H(+). It functions in the pathway metabolic intermediate biosynthesis; chorismate biosynthesis; chorismate from D-erythrose 4-phosphate and phosphoenolpyruvate: step 4/7. In terms of biological role, involved in the biosynthesis of the chorismate, which leads to the biosynthesis of aromatic amino acids. Catalyzes the reversible NADPH linked reduction of 3-dehydroshikimate (DHSA) to yield shikimate (SA). The protein is Shikimate dehydrogenase (NADP(+)) of Bacillus cereus (strain ATCC 10987 / NRS 248).